Consider the following 442-residue polypeptide: Ribosomal protein uS12 methylthiotransferase RimO (442 aa).

An MTTase N-terminal domain is found at 13-129 (RSIFLLSLGC…ILNILGTAYD (117 aa)). 6 residues coordinate [4Fe-4S] cluster: Cys22, Cys58, Cys92, Cys153, Cys157, and Cys160. The 231-residue stretch at 139–369 (LSPSHYAWLK…MELQEGISEK (231 aa)) folds into the Radical SAM core domain. Positions 372 to 439 (RALEEKALKV…AYELVGRIKN (68 aa)) constitute a TRAM domain.

Belongs to the methylthiotransferase family. RimO subfamily. [4Fe-4S] cluster is required as a cofactor.

Its subcellular location is the cytoplasm. It carries out the reaction L-aspartate(89)-[ribosomal protein uS12]-hydrogen + (sulfur carrier)-SH + AH2 + 2 S-adenosyl-L-methionine = 3-methylsulfanyl-L-aspartate(89)-[ribosomal protein uS12]-hydrogen + (sulfur carrier)-H + 5'-deoxyadenosine + L-methionine + A + S-adenosyl-L-homocysteine + 2 H(+). Its function is as follows. Catalyzes the methylthiolation of an aspartic acid residue of ribosomal protein uS12. The protein is Ribosomal protein uS12 methylthiotransferase RimO of Chlorobium phaeobacteroides (strain BS1).